The chain runs to 78 residues: Small ribosomal subunit protein bS18 (78 aa).

It belongs to the bacterial ribosomal protein bS18 family. In terms of assembly, part of the 30S ribosomal subunit. Forms a tight heterodimer with protein bS6.

In terms of biological role, binds as a heterodimer with protein bS6 to the central domain of the 16S rRNA, where it helps stabilize the platform of the 30S subunit. This chain is Small ribosomal subunit protein bS18, found in Kocuria rhizophila (strain ATCC 9341 / DSM 348 / NBRC 103217 / DC2201).